We begin with the raw amino-acid sequence, 548 residues long: Probable aquaglyceroporin-4 (548 aa).

A compositionally biased stretch (polar residues) spans 1–22; it reads MAGTQDQSQDYFSKPTTPSTPG. 3 disordered regions span residues 1–63, 76–101, and 158–270; these read MAGT…LPST, SRGFSRVSSEGTASRPTAPQHSSHFH, and KEET…ESGD. Residues 1-290 are Cytoplasmic-facing; that stretch reads MAGTQDQSQD…ARLRARHPEP (290 aa). Over residues 38 to 48 the composition is skewed to basic and acidic residues; sequence PDRESGTERAK. Polar residues-rich tracts occupy residues 77–97 and 171–200; these read RGFSRVSSEGTASRPTAPQHS and SRTTSGQPYRVETQSSLPSRDIQRQQSRTT. Residues 249–265 show a composition bias toward basic and acidic residues; the sequence is PDFKVDGEPLGHQEKPC. A helical membrane pass occupies residues 291-311; it reads LAEFLATAVAIFLGLTGTLSV. An N-linked (GlcNAc...) asparagine glycan is attached at N312. Topologically, residues 312–327 are extracellular; that stretch reads NLSATQSQPYGTYETS. A helical membrane pass occupies residues 328–348; that stretch reads CWAWGFAWMFGIYLGGGVSGA. Residues 349-369 lie on the Cytoplasmic side of the membrane; sequence HMNPAISVSLSIFRGFPWRQC. Positions 351 to 353 match the NPA 1 motif; it reads NPA. Residues 370–390 form a helical membrane-spanning segment; sequence VIYVFVQFIASIVAGALAYAM. The Extracellular segment spans residues 391–420; it reads YADSINHVDPDMTKMSMTFFSTPREWVTLK. A helical membrane pass occupies residues 421 to 441; that stretch reads SAFFNQVVGSAIMMIAVFALG. Topologically, residues 442–448 are cytoplasmic; sequence DDQNNPP. A helical membrane pass occupies residues 449 to 469; that stretch reads GAGMHALVLGFLVTTLKFTLG. The Extracellular segment spans residues 470–508; sequence YNIGSALNPASDFGPRVIAYAVGFRGDNVFHSGWWFYGP. Residues 477 to 479 carry the NPA 2 motif; the sequence is NPA. Residues 509 to 529 traverse the membrane as a helical segment; it reads WAATLIGSLLGCTLYDGFVFV. Over 530 to 548 the chain is Cytoplasmic; that stretch reads GSESPVNFRVDKRVKKLFN.

Belongs to the MIP/aquaporin (TC 1.A.8) family.

Its subcellular location is the membrane. The catalysed reaction is H2O(in) = H2O(out). The enzyme catalyses glycerol(in) = glycerol(out). In terms of biological role, probable water/glycerol channel that may have redundant functions with FgAQP2. The chain is Probable aquaglyceroporin-4 from Gibberella zeae (strain ATCC MYA-4620 / CBS 123657 / FGSC 9075 / NRRL 31084 / PH-1) (Wheat head blight fungus).